Here is a 107-residue protein sequence, read N- to C-terminus: SOSS complex subunit C (107 aa).

It belongs to the SOSS-C family. In terms of assembly, belongs to the multiprotein complex Integrator. Component of the SOSS complex, composed of soss-b (soss-b1/nabp2 or soss-b2/nabp1), soss-a/ints3 and soss-c/inip.

The protein localises to the nucleus. In terms of biological role, component of the SOSS complex, a multiprotein complex that functions downstream of the MRN complex to promote DNA repair and G2/M checkpoint. The SOSS complex associates with single-stranded DNA at DNA lesions and influences diverse endpoints in the cellular DNA damage response including cell-cycle checkpoint activation, recombinational repair and maintenance of genomic stability. Required for efficient homologous recombination-dependent repair of double-strand breaks (DSBs). The chain is SOSS complex subunit C (inip) from Salmo salar (Atlantic salmon).